The following is an 87-amino-acid chain: Toxin Cll5c (87 aa).

The first 19 residues, 1-19 (MNSLLMITACLVLFGTVWA), serve as a signal peptide directing secretion. The LCN-type CS-alpha/beta domain maps to 20 to 85 (KEGYLVNKST…TYPLPNKSCS (66 aa)). Cystine bridges form between C31–C84, C35–C60, C44–C65, and C48–C67. Residues 86-87 (KK) constitute a propeptide, removed by a carboxypeptidase.

It belongs to the long (4 C-C) scorpion toxin superfamily. Sodium channel inhibitor family. Beta subfamily. In terms of tissue distribution, expressed by the venom gland.

It is found in the secreted. In terms of biological role, beta toxins bind voltage-independently at site-4 of sodium channels (Nav) and shift the voltage of activation toward more negative potentials thereby affecting sodium channel activation and promoting spontaneous and repetitive firing. In Centruroides limpidus (Mexican scorpion), this protein is Toxin Cll5c.